The chain runs to 284 residues: Tropomyosin-1 (284 aa).

Residues 1-284 are a coiled coil; that stretch reads MDGIKKKMIA…DQTFAELTGY (284 aa). The interval 111-131 is disordered; the sequence is TKLEEASKTAEESERGRKDLE.

The protein belongs to the tropomyosin family. Homodimer.

Its function is as follows. Tropomyosin, in association with the troponin complex, plays a central role in the calcium dependent regulation of muscle contraction. This chain is Tropomyosin-1, found in Schistosoma mansoni (Blood fluke).